A 110-amino-acid polypeptide reads, in one-letter code: Snake venom vascular endothelial growth factor toxin HF (110 aa).

Q1 bears the Pyrrolidone carboxylic acid mark. Disulfide bonds link C14-C56, C45-C91, and C49-C93.

This sequence belongs to the PDGF/VEGF growth factor family. Snake venom VEGF subfamily. In terms of assembly, homodimer; disulfide-linked. Interacts with VEGF receptor-2 (KDR) with high affinity. As to expression, expressed by the venom gland.

The protein resides in the secreted. Its function is as follows. Snake venom VEGFs that may contribute to venom dispersion and prey subjugation by inducing vascular permeability and hypotension. This protein induces an increase in capillary permeability after intradermal injection, as well as a drastic hypotensive effect after intravenous injection. The hypotension is mediated by nitric oxide (NO), which is produced by VEGF-activated endothelium NO synthase. Also induces angiogenesis in vitro, probably through VEGF receptor (KDR/VEGFR-2) signaling. The protein is Snake venom vascular endothelial growth factor toxin HF of Vipera aspis aspis (Aspic viper).